The following is a 153-amino-acid chain: Probable succinate transporter subunit YjjB (153 aa).

Transmembrane regions (helical) follow at residues 7 to 27 (WALL…AMVF), 51 to 71 (MIHF…MIGI), 83 to 103 (VFTV…TAMI), and 125 to 145 (FLKA…PGLW).

The protein belongs to the ThrE exporter (TC 2.A.79) family. The transporter is composed of YjjB and YjjP.

Its subcellular location is the cell inner membrane. Involved in succinate export with YjjP. Both proteins are required for export. This Yersinia pestis bv. Antiqua (strain Antiqua) protein is Probable succinate transporter subunit YjjB.